The primary structure comprises 466 residues: Asparagine--tRNA ligase (466 aa).

Belongs to the class-II aminoacyl-tRNA synthetase family. Homodimer.

Its subcellular location is the cytoplasm. The catalysed reaction is tRNA(Asn) + L-asparagine + ATP = L-asparaginyl-tRNA(Asn) + AMP + diphosphate + H(+). This Buchnera aphidicola subsp. Schizaphis graminum (strain Sg) protein is Asparagine--tRNA ligase.